The following is a 201-amino-acid chain: Small ribosomal subunit protein uS4c (201 aa).

The interval 19–38 (PGLTSKSPKAGSDLRNQLRS) is disordered. One can recognise an S4 RNA-binding domain in the interval 89-149 (MRLDNILFRL…DEQKSRALIQ (61 aa)).

The protein belongs to the universal ribosomal protein uS4 family. As to quaternary structure, part of the 30S ribosomal subunit. Contacts protein S5. The interaction surface between S4 and S5 is involved in control of translational fidelity.

It is found in the plastid. It localises to the chloroplast. In terms of biological role, one of the primary rRNA binding proteins, it binds directly to 16S rRNA where it nucleates assembly of the body of the 30S subunit. With S5 and S12 plays an important role in translational accuracy. This Platanus occidentalis (Sycamore) protein is Small ribosomal subunit protein uS4c (rps4).